A 490-amino-acid polypeptide reads, in one-letter code: Probable cytosol aminopeptidase (490 aa).

Lys-257 and Asp-262 together coordinate Mn(2+). Residue Lys-269 is part of the active site. Positions 281, 341, and 343 each coordinate Mn(2+). The active site involves Arg-345.

Belongs to the peptidase M17 family. Mn(2+) serves as cofactor.

The protein resides in the cytoplasm. The catalysed reaction is Release of an N-terminal amino acid, Xaa-|-Yaa-, in which Xaa is preferably Leu, but may be other amino acids including Pro although not Arg or Lys, and Yaa may be Pro. Amino acid amides and methyl esters are also readily hydrolyzed, but rates on arylamides are exceedingly low.. The enzyme catalyses Release of an N-terminal amino acid, preferentially leucine, but not glutamic or aspartic acids.. Presumably involved in the processing and regular turnover of intracellular proteins. Catalyzes the removal of unsubstituted N-terminal amino acids from various peptides. The sequence is that of Probable cytosol aminopeptidase from Prochlorococcus marinus (strain AS9601).